The chain runs to 445 residues: Acyl-lipid (7-3)-desaturase (445 aa).

Residues 11–91 (VAELRAAEVA…MSKFFVGSLD (81 aa)) enclose the Cytochrome b5 heme-binding domain. Heme is bound by residues His-50 and His-73. The next 2 helical transmembrane spans lie at 126 to 146 (YWLK…YMLL) and 148 to 168 (GKTL…GLNI). The Histidine box-1 motif lies at 170–174 (HDANH). The Histidine box-2 motif lies at 205–210 (HVVMHH). A run of 3 helical transmembrane segments spans residues 247–267 (ILPG…LELL), 283–303 (LFAP…ALPL), and 312–332 (ALCI…FFFI). The short motif at 380 to 384 (QIEHH) is the Histidine box-3 element.

Belongs to the fatty acid desaturase type 1 family. The cofactor is Fe(2+).

The protein localises to the membrane. The enzyme catalyses a (7Z,10Z,13Z,16Z,19Z)-docosapentaenoyl-containing glycerolipid + 2 Fe(II)-[cytochrome b5] + O2 + 2 H(+) = a (4Z,7Z,10Z,13Z,16Z,19Z)-docosahexaenoyl-containing glycerolipid + 2 Fe(III)-[cytochrome b5] + 2 H2O. It catalyses the reaction a (7Z,10Z,13Z,16Z)-docosatetraenoyl-containing glycerolipid + 2 Fe(II)-[cytochrome b5] + O2 + 2 H(+) = a (4Z,7Z,10Z,13Z,16Z)-docosapentaenoyl-containing glycerolipid + 2 Fe(III)-[cytochrome b5] + 2 H2O. Its function is as follows. Fatty acid desaturase that introduces a cis double bond at the 4-position in 22-carbon polyunsaturated fatty acids that contain a Delta(7) double bond, resulting in the production of delta-4 desaturated fatty acid docosahexanoic acid (DHA). Mediates desaturation of 22:5n-3 and 22:4n-6 into 22:6n-3 and 22:5n-6 respectively. In Diacronema lutheri (Unicellular marine alga), this protein is Acyl-lipid (7-3)-desaturase.